The sequence spans 141 residues: MTRFWIGVVSKEHVLRGVEGGFCQVCHGKKAPLNRMKKGDYLLYYSPKYQMNDQEKLQAFTAVGKILDDTAYQVEMFEDFFPFRRDVSYYQPVKDCPIEQIRQHPQWRQYASQLRYGHFEVSKDFFLYVFDQMKVDRSRNN.

Belongs to the UPF0310 family.

The polypeptide is UPF0310 protein SGO_1818 (Streptococcus gordonii (strain Challis / ATCC 35105 / BCRC 15272 / CH1 / DL1 / V288)).